A 356-amino-acid polypeptide reads, in one-letter code: CLIP domain-containing serine protease C9 (356 aa).

Residues 49-94 (SCDTPQVIGGKCMNISLCDPAFVHSIAYQEHTPVCQQNAFYRVICC) enclose the Clip domain. Disulfide bonds link cysteine 50–cysteine 93, cysteine 60–cysteine 83, cysteine 66–cysteine 94, and cysteine 139–cysteine 155. Asparagine 62 is a glycosylation site (N-linked (GlcNAc...) asparagine). The 243-residue stretch at 109-351 (IMHGIEAEPG…YFGWIKETVS (243 aa)) folds into the Peptidase S1 domain. Catalysis depends on charge relay system residues histidine 154 and aspartate 194. An intrachain disulfide couples cysteine 258 to cysteine 284. A glycan (N-linked (GlcNAc...) asparagine) is linked at asparagine 292. A disulfide bond links cysteine 300 and cysteine 328. Serine 304 serves as the catalytic Charge relay system.

Belongs to the peptidase S1 family. CLIP subfamily. In terms of assembly, in the active form, heterodimer of a p12 subunit and a p30 subunit; disulfide-linked. Secreted as a full-length protein. Following bacterium E.coli infection, proteolytically cleaved into two chains, p12 and p30, which remain covalently linked.

It is found in the secreted. Functionally, probable serine protease which plays an essential role in the innate immune response against bacteria and protozoa infection by activating the melanization cascade. In the susceptible strain G3, appears to be dispensable for ookinete elimination which occurs by lysis. The polypeptide is CLIP domain-containing serine protease C9 (Anopheles gambiae (African malaria mosquito)).